We begin with the raw amino-acid sequence, 297 residues long: Nitrogenase iron protein 2 (297 aa).

Position 14–21 (14–21 (GKGGIGKS)) interacts with ATP. Cysteine 102 is a [4Fe-4S] cluster binding site. Arginine 105 carries the ADP-ribosylarginine; by dinitrogenase reductase ADP-ribosyltransferase modification. Residue cysteine 136 participates in [4Fe-4S] cluster binding.

This sequence belongs to the NifH/BchL/ChlL family. As to quaternary structure, homodimer. [4Fe-4S] cluster serves as cofactor. The reversible ADP-ribosylation of Arg-105 inactivates the nitrogenase reductase and regulates nitrogenase activity.

The catalysed reaction is N2 + 8 reduced [2Fe-2S]-[ferredoxin] + 16 ATP + 16 H2O = H2 + 8 oxidized [2Fe-2S]-[ferredoxin] + 2 NH4(+) + 16 ADP + 16 phosphate + 6 H(+). Its function is as follows. The key enzymatic reactions in nitrogen fixation are catalyzed by the nitrogenase complex, which has 2 components: the iron protein and the molybdenum-iron protein. The polypeptide is Nitrogenase iron protein 2 (nifH2) (Nostoc sp. (strain PCC 7120 / SAG 25.82 / UTEX 2576)).